The following is a 581-amino-acid chain: Frizzled-3 (581 aa).

The first 19 residues, methionine 1–alanine 19, serve as a signal peptide directing secretion. At alanine 20–threonine 237 the chain is on the extracellular side. The region spanning proline 35–isoleucine 156 is the FZ domain. Cystine bridges form between cysteine 40–cysteine 101, cysteine 48–cysteine 94, cysteine 85–cysteine 123, cysteine 112–cysteine 153, and cysteine 116–cysteine 141. N-linked (GlcNAc...) asparagine glycosylation is present at asparagine 54. Asparagine 206 is a glycosylation site (N-linked (GlcNAc...) asparagine). Residues leucine 238–tryptophan 258 form a helical membrane-spanning segment. Topologically, residues alanine 259–proline 270 are cytoplasmic. A helical membrane pass occupies residues valine 271–phenylalanine 291. The Extracellular segment spans residues histidine 292 to tyrosine 321. The helical transmembrane segment at isoleucine 322–phenylalanine 342 threads the bilayer. Topologically, residues tyrosine 343–serine 359 are cytoplasmic. The chain crosses the membrane as a helical span at residues glycine 360 to leucine 380. Topologically, residues glutamate 381–tyrosine 393 are extracellular. Residues alanine 394–leucine 414 form a helical membrane-spanning segment. Residues arginine 415–arginine 442 lie on the Cytoplasmic side of the membrane. The chain crosses the membrane as a helical span at residues phenylalanine 443 to cysteine 463. The Extracellular segment spans residues glutamate 464 to tryptophan 488. A helical membrane pass occupies residues proline 489–tryptophan 509. The Cytoplasmic segment spans residues serine 510–valine 581. The PDZ-binding motif lies at serine 579–valine 581.

The protein belongs to the G-protein coupled receptor Fz/Smo family. As to expression, wing, leg and eye imaginal disks. In embryos, expressed is seen in brain, proventriculus, Malpighian tubules, anal plate and visceral mesoderm of parasegment 8.

It is found in the membrane. In terms of biological role, receptor for Wnt proteins. Most of frizzled receptors are coupled to the beta-catenin canonical signaling pathway, which leads to the activation of disheveled proteins, inhibition of GSK-3 kinase, nuclear accumulation of beta-catenin and activation of Wnt target genes. A second signaling pathway involving PKC and calcium fluxes has been seen for some family members, but it is not yet clear if it represents a distinct pathway or if it can be integrated in the canonical pathway, as PKC seems to be required for Wnt-mediated inactivation of GSK-3 kinase. Both pathways seem to involve interactions with G-proteins. Required to coordinate the cytoskeletons of epidermal cells to produce a parallel array of cuticular hairs and bristles. This Drosophila melanogaster (Fruit fly) protein is Frizzled-3 (fz3).